The primary structure comprises 244 residues: Lipoprotein-releasing system ATP-binding protein LolD (244 aa).

Positions Ile-19–Val-244 constitute an ABC transporter domain. Position 55-62 (Gly-55–Ser-62) interacts with ATP.

The protein belongs to the ABC transporter superfamily. Lipoprotein translocase (TC 3.A.1.125) family. In terms of assembly, the complex is composed of two ATP-binding proteins (LolD) and two transmembrane proteins (LolC and LolE).

It localises to the cell inner membrane. In terms of biological role, part of the ABC transporter complex LolCDE involved in the translocation of mature outer membrane-directed lipoproteins, from the inner membrane to the periplasmic chaperone, LolA. Responsible for the formation of the LolA-lipoprotein complex in an ATP-dependent manner. This Xanthomonas oryzae pv. oryzae (strain MAFF 311018) protein is Lipoprotein-releasing system ATP-binding protein LolD.